Here is a 2671-residue protein sequence, read N- to C-terminus: Stalled ribosome sensor GCN1 (2671 aa).

A2 carries the N-acetylalanine modification. HEAT repeat units follow at residues 140 to 178 (NKLVEVQCLLLLEVLGGSHKHAVDGAVKKLTKLWKENPG), 257 to 293 (EFKDLILPTIQKSLLRSPENVIETISSLLASVTLDLS), 294 to 331 (QYALDIVKGLANQLKSNSPRLMDEAVLALRNLARQCSD), 385 to 423 (CVAELFIPFLQQEVHEGTLVHAVSILALWCNRFTTEVPK), 425 to 459 (LTDWFKKVFSLKTSTSAVRHAYLQCMLASFRGDTL), 460 to 500 (LQAL…SKLS), 560 to 597 (SKVQQYYRVLVAVLLSRTWHVRRQAQQTVRKLLSSLGG), 599 to 636 (KLANGLLDELKTVLNSHKVLPLEALVTDAGEVTEMGKT), 700 to 732 (AFITRHLDQIIPRITTQSPLNQSSMNAMGSLSV), and 733 to 772 (LSPDRVLPQLISTITASVQNPALCLVTREEFSIMQTPAGE). S729 carries the post-translational modification Phosphoserine. The residue at position 786 (S786) is a Phosphoserine. Residues 804–865 (QIIEMELKEE…EAALGLLDAI (62 aa)) adopt a coiled-coil conformation. HEAT repeat units follow at residues 879–918 (VLVDAFLPLLKSPLAAPRVKGPFLSLAACVMPPRLKTLGT), 979–1016 (SLVFPMLKMVLTEMPYHSEEEEEQMAQILQILTVHAQL), 1035–1072 (LPRVAMLRLLTWVIGTGSPRLQVLASDTLTALCASSSG), 1078–1115 (FAEQEEVDVLLAALQSPCASVRETALRGLMELRLVLPS), 1155–1192 (DLQSDLCSLLIDDVIYHEAAVRQAGAEALSQAVARYQR), 1210–1250 (YRPP…YLDS), 1251–1289 (SQVKPLFQFFVPDALNDRNPDVRKCMLDAALATLNAHGK), 1290–1332 (ENVN…HLDK), 1335–1372 (PKVKPIVAKLIAALSTPSQQVQESVASCLPPLVPAVKE), 1374–1410 (AGGMIQRLMQQLLESDKYAERKGAAYGLAGLVKGLGI), 1413–1451 (LKQQEMMAALTDAIQDKKNFRRREGALFAFEMLCTMLGK), 1455–1492 (PYVVHVLPHLLLCFGDGNQYVREAADDCAKAVMSNLSA), 1493–1530 (HGVKLVLPSLLAALEEESWRTKAGSVELLGAMAYCAPK), 1534–1571 (SCLPNIVPKLTEVLTDSHVKVQKAGQQALRQIGSVIRN), 1573–1609 (EILAIAPVLLDALTDPSRKTQKCLQTLLDTKFVHFID), 1611–1648 (PSLALIMPIVQRAFQDRSTDTRKMAAQIIGNMYSLTDQ), 1653–1690 (PYLPSVTPGLKASLLDPVPEVRTVSAKALGAMVKGMGE), 1692–1729 (CFEDLLPWLMETLTYEQSSVDRSGAAQGLAEVMAGLGV), 1731–1769 (KLEKLMPEIVATASKVDIAPHVRDGYIMMFNYLPITFGD), 1773–1810 (PYVGPIIPCILKALADENEFVRDTALRAGQRVISMYAE), 1812–1848 (AIALLLPQLEQGLFDDLWRIRFSSVQLLGDLLFHISG), 1921–1958 (EILPTLFGLLLGFLASTCADKRTIAARTLGDLVRKLGE), 1959–1996 (KILPEIIPILEEGLRSQKSDERQGVCIGLSEIMKSTSR), 2001–2038 (FFSESLVPTARKALCDPLEEVREAAAKTFEQLHSTIGH), 2039–2074 (QALEDILPFLLKQLDDEEVSEFALDGLKQVMAVKSR), 2076–2108 (VLPYLVPKLTTPPVNTRVLAFLSSVAGDALTRH), 2111–2146 (VILPAVMLALKEKLGTPDEQLEMANCQAVILSVEDD), 2147–2184 (TGHRIIIEDLLEATRSPEVGMRQAAAIILNMYCSRSKA), 2188–2225 (SHLRSLVSGLIRLFNDSSPVVLEESWDALNAITKKLDA), 2259–2296 (RGVTSILPVLREGVLTGSPEQKEEAAKGLGLVIRLTSA), 2301–2338 (PSVVSITGPLIRILGDRFNWTVKAALLETLSLLLGKVG), 2339–2380 (IALK…IHVK), 2382–2417 (DPLFTELLNGIRAVEDPGIRDTMLQALRFVIQGAGS), 2422–2459 (AIRKNLVSLLLSMLGHDEDNTRISTAGCLGELCAFLTD), 2546–2583 (QLPPRLSSLLIKCLQNPCSDIRLVAEKMIWWANKEPRP), 2588–2625 (QTIKPILKALLDNTKDKNTVVRAYSDQAIVNLLKMRRG), and 2627–2661 (ELLQSLSKILDVASLEALNECSRRSLRKLACQADS). Positions 2260 to 2408 (GVTSILPVLR…GIRDTMLQAL (149 aa)) are RWDBD region. S2276 carries the post-translational modification Phosphoserine.

The protein belongs to the GCN1 family. As to quaternary structure, interacts with EIF2AK4/GCN2; this interaction stimulates the EIF2AK4/GCN2 kinase activity and is impaired by IMPACT upon a variety of stress conditions, such as amino acid depletion, UV-C irradiation, proteasome inhibitor treatment and glucose deprivation. Interacts with IMPACT; this prevents the interaction of GCN1 with EIF2AK4/GCN2 and inhibits EIF2AK4/GCN2 kinase activity. Interacts with RNF14; interaction takes place following ribosome stalling and promotes recruitment of RNF14. Expressed in the hypothalamus, cortex and hippocampus.

Its subcellular location is the cytoplasm. Ribosome collision sensor that plays a key role in the RNF14-RNF25 translation quality control pathway, a pathway that takes place when a ribosome has stalled during translation, and which promotes ubiquitination and degradation of translation factors on stalled ribosomes. Directly binds to the ribosome and acts as a sentinel for colliding ribosomes: activated following ribosome stalling and promotes recruitment of RNF14, which directly ubiquitinates EEF1A1/eEF1A, leading to its degradation. In addition to EEF1A1/eEF1A, the RNF14-RNF25 translation quality control pathway mediates degradation of ETF1/eRF1 and ubiquitination of ribosomal protein. GCN1 also acts as a positive activator of the integrated stress response (ISR) by mediating activation of EIF2AK4/GCN2 in response to amino acid starvation. Interaction with EIF2AK4/GCN2 on translating ribosomes stimulates EIF2AK4/GCN2 kinase activity, leading to phosphorylation of eukaryotic translation initiation factor 2 (eIF-2-alpha/EIF2S1). EIF2S1/eIF-2-alpha phosphorylation converts EIF2S1/eIF-2-alpha into a global protein synthesis inhibitor, leading to a global attenuation of cap-dependent translation, and thus to a reduced overall utilization of amino acids, while concomitantly initiating the preferential translation of ISR-specific mRNAs, such as the transcriptional activator ATF4, and hence allowing ATF4-mediated reprogramming of amino acid biosynthetic gene expression to alleviate nutrient depletion. The polypeptide is Stalled ribosome sensor GCN1 (Mus musculus (Mouse)).